The sequence spans 307 residues: Methionyl-tRNA formyltransferase (307 aa).

108–111 (SLLP) is a (6S)-5,6,7,8-tetrahydrofolate binding site.

The protein belongs to the Fmt family.

It catalyses the reaction L-methionyl-tRNA(fMet) + (6R)-10-formyltetrahydrofolate = N-formyl-L-methionyl-tRNA(fMet) + (6S)-5,6,7,8-tetrahydrofolate + H(+). Attaches a formyl group to the free amino group of methionyl-tRNA(fMet). The formyl group appears to play a dual role in the initiator identity of N-formylmethionyl-tRNA by promoting its recognition by IF2 and preventing the misappropriation of this tRNA by the elongation apparatus. This is Methionyl-tRNA formyltransferase from Xanthomonas euvesicatoria pv. vesicatoria (strain 85-10) (Xanthomonas campestris pv. vesicatoria).